Consider the following 367-residue polypeptide: Phosphoribosylaminoimidazole-succinocarboxamide synthase (367 aa).

Belongs to the SAICAR synthetase family.

The enzyme catalyses 5-amino-1-(5-phospho-D-ribosyl)imidazole-4-carboxylate + L-aspartate + ATP = (2S)-2-[5-amino-1-(5-phospho-beta-D-ribosyl)imidazole-4-carboxamido]succinate + ADP + phosphate + 2 H(+). The protein operates within purine metabolism; IMP biosynthesis via de novo pathway; 5-amino-1-(5-phospho-D-ribosyl)imidazole-4-carboxamide from 5-amino-1-(5-phospho-D-ribosyl)imidazole-4-carboxylate: step 1/2. The protein is Phosphoribosylaminoimidazole-succinocarboxamide synthase of Shewanella baltica (strain OS155 / ATCC BAA-1091).